Reading from the N-terminus, the 518-residue chain is Circadian clock oscillator protein KaiC (518 aa).

The KaiC 1 domain occupies 1–247 (MTNLPEHQSS…FTINNGINIF (247 aa)). ATP contacts are provided by serine 49, glycine 50, threonine 51, glycine 52, lysine 53, threonine 54, and leucine 55. Threonine 54 is a Mg(2+) binding site. Residue glutamate 78 is the Proton acceptor in CI (KaiC 1) of the active site. Serine 90 contacts ATP. A B-loop, required to bind KaiB and SasA region spans residues 116-123 (QEVAGDFD). ATP is bound by residues lysine 225, leucine 226, arginine 227, threonine 229, and histidine 231. The interval 248–260 (PLGAMRLTQRSSN) is linker. The KaiC 2 domain occupies 261 to 518 (VRVSSGVKTL…AKGMQDLESE (258 aa)). The ATP site is built by threonine 290, glycine 291, threonine 292, glycine 293, lysine 294, threonine 295, and leucine 296. Threonine 295 contributes to the Mg(2+) binding site. Residue glutamate 318 participates in Mg(2+) binding. Glutamate 318 (proton acceptor in CII (KaiC 2)) is an active-site residue. ATP is bound at residue tryptophan 331. Position 431 is a phosphoserine; by autocatalysis (serine 431). Threonine 432 bears the Phosphothreonine; by autocatalysis mark. ATP-binding residues include arginine 451, lysine 457, methionine 458, arginine 459, serine 461, histidine 463, and lysine 465. Residues 488 to 497 (GIISGTPTRI) are A-loop, interacts with KaiA.

This sequence belongs to the KaiC family. Homohexamer resembling 2 stacked donuts rings with a central pore nearly blocked on one side; hexamerization is dependent on ATP-binding. Binds 2 ATP per monomer, at the subunit interface on each ring. The KaiABC complex composition changes during the circadian cycle to control KaiC phosphorylation. Complexes KaiC(6), KaiA(2-4):KaiC(6), KaiB(6):KaiC(6) and KaiC(6):KaiB(6):KaiA(12) are among the most important forms, many form cooperatively. Interacts with SasA, probably as 1 SasA trimer:1 KaiC homohexamer, has highest affinity for unphosphorylated SasA. The CI domain binds to KaiB and SasA; as they have a similar fold they compete for the same site on CI. KaiB assumes a thioredoxin-like form called KaiB(fs) when bound to KaiC. Mg(2+) is required as a cofactor. Phosphorylated on serine/threonine residues by autocatalysis. Both phosphorylated and unphosphorylated forms exist. Both autophosphorylates and autodephosphorylates. Phosphorylated form correlates with clock speed. In terms of processing, phosphorylated on serine and threonine residues by autocatalysis. Has a 4 step phosphorylation cycle; the autokinase acts first on Thr-432, then Ser-431. When Ser-431 is modified KaiC switches to an autophosphatase mode, acting first on phospho-Thr-432 then phospho-Ser-431.

The catalysed reaction is L-seryl-[protein] + ATP = O-phospho-L-seryl-[protein] + ADP + H(+). The enzyme catalyses L-threonyl-[protein] + ATP = O-phospho-L-threonyl-[protein] + ADP + H(+). It catalyses the reaction ATP + H2O = ADP + phosphate + H(+). Its activity is regulated as follows. The interaction with KaiA enhances its phosphorylation status, while the interaction with KaiB decreases it. In terms of biological role, central component of the KaiABC oscillator complex, which constitutes the main circadian regulator in cyanobacteria. Complex composition changes during the circadian cycle to control KaiC phosphorylation. KaiA stimulates KaiC autophosphorylation, while KaiB sequesters KaiA, leading to KaiC autodephosphorylation. Clock output pathways impact the RpaA transcriptional regulator. KaiC enhances the autophosphorylation activity of SasA, which then transfers its phosphate group to RpaA to activate it. KaiB and KaiC together enhance the phospho-RpaA dephosphatase activity of CikA. Functionally, stimulates SasA autophosphorylation. Fully phosphorylated KaiC (tested with phosphomimetic Asp-431-432-Asp) is the best stimulant, requires the ATPase activity of the CII domain. Unphosphorylated SasA associates with KaiC and its autophosphorylation activity is enhanced. Phospho-SasA is released and associates with RpaA, transferring its phosphate group. Formation of the KaiA:KaiB complex is promoted by KaiC, helping switch KaiC from its autophosphorylation to autodephosphatase function. Has a weak, temperature-independent ATPase activity (about 14 molecules of ATP per day) that defines the circadian period. ATPase activity is mostly contributed by the CI domain; the CII domain augments the activity. The addition of KaiA increases activity. ATPase is inhibited during the KaiC phosphorylating phase and activated during the KaiC dephosphorylating phase. The chain is Circadian clock oscillator protein KaiC from Thermosynechococcus vestitus (strain NIES-2133 / IAM M-273 / BP-1).